A 571-amino-acid polypeptide reads, in one-letter code: MKVLVTSAWPYVNAVPHLGNLIGSILSADVFARYARLKYGKENVVFVSGSDEHGTPIEIEARKRNIEPKKLTDQAHAYDKKLFIDTWKISFDNYSRTESEVHKEFVRNFLVKLEKYIKVEEDEIPYCEKDKLFLPDRFIKGVCPYCGFEDARGDQCDNCGRLLTPRSLVNAKCALCGNPPVFKVTKHWFFDLSEFGDKIRDWISSSSTMPDNVKSVALSWVKEGLRPRSITRDNMWGIPAPFAGAENKTIYVWFEALLGYLSATVEYFKNLGKEEMWKEFWLYNDTKTYYFIGKDNIPFHAVILPAMLMASNEKYNLPSVIAATEYLLYEGQKFSKSRKIGVWIDEADKLMDVEYWRFILIRLRPEEKDTNFTWREALRIVNTELNDDIGNYANRVLSMVKRYYDGVVPSPKEAIFNDEDKNLITLIKESPKRMGELFELGKIKAGSEEILKLARSGNLYLNNRAPWSLVKTNKEEANNVLYISVNSLRTLAIMLYPIMPTYSSNLYQQLGLSNLESETWDSAGSLKIMPGHKIGEIRSLFKKIEMSPEELMKKLDEIRREVEKERPDLLR.

The 'HIGH' region signature appears at 10–20 (PYVNAVPHLGN). Positions 143, 146, 156, and 159 each coordinate Zn(2+). The 'KMSKS' region motif lies at 333-337 (KFSKS). An ATP-binding site is contributed by Lys336.

It belongs to the class-I aminoacyl-tRNA synthetase family. MetG type 1 subfamily. Zn(2+) serves as cofactor.

It is found in the cytoplasm. The catalysed reaction is tRNA(Met) + L-methionine + ATP = L-methionyl-tRNA(Met) + AMP + diphosphate. Is required not only for elongation of protein synthesis but also for the initiation of all mRNA translation through initiator tRNA(fMet) aminoacylation. In Sulfolobus acidocaldarius (strain ATCC 33909 / DSM 639 / JCM 8929 / NBRC 15157 / NCIMB 11770), this protein is Methionine--tRNA ligase.